Consider the following 382-residue polypeptide: 1-deoxy-D-xylulose 5-phosphate reductoisomerase (382 aa).

NADPH contacts are provided by Thr-10, Gly-11, Ser-12, Ile-13, Gly-36, and Asn-122. Residue Lys-123 participates in 1-deoxy-D-xylulose 5-phosphate binding. Glu-124 contributes to the NADPH binding site. Residue Asp-148 coordinates Mn(2+). Residues Ser-149, Glu-150, Ser-174, and His-197 each coordinate 1-deoxy-D-xylulose 5-phosphate. Mn(2+) is bound at residue Glu-150. Gly-203 provides a ligand contact to NADPH. Residues Ser-210, Asn-215, Lys-216, and Glu-219 each coordinate 1-deoxy-D-xylulose 5-phosphate. Residue Glu-219 coordinates Mn(2+).

Belongs to the DXR family. It depends on Mg(2+) as a cofactor. The cofactor is Mn(2+).

It carries out the reaction 2-C-methyl-D-erythritol 4-phosphate + NADP(+) = 1-deoxy-D-xylulose 5-phosphate + NADPH + H(+). Its pathway is isoprenoid biosynthesis; isopentenyl diphosphate biosynthesis via DXP pathway; isopentenyl diphosphate from 1-deoxy-D-xylulose 5-phosphate: step 1/6. In terms of biological role, catalyzes the NADPH-dependent rearrangement and reduction of 1-deoxy-D-xylulose-5-phosphate (DXP) to 2-C-methyl-D-erythritol 4-phosphate (MEP). This chain is 1-deoxy-D-xylulose 5-phosphate reductoisomerase, found in Chlorobium chlorochromatii (strain CaD3).